Consider the following 420-residue polypeptide: L-rhamnose isomerase (420 aa).

His-262, Asp-294, and Asp-296 together coordinate Mn(2+).

Belongs to the rhamnose isomerase family. In terms of assembly, homotetramer. It depends on Mn(2+) as a cofactor.

The protein localises to the cytoplasm. It catalyses the reaction L-rhamnopyranose = L-rhamnulose. It functions in the pathway carbohydrate degradation; L-rhamnose degradation; glycerone phosphate from L-rhamnose: step 1/3. Catalyzes the interconversion of L-rhamnose and L-rhamnulose. This chain is L-rhamnose isomerase, found in Pectobacterium atrosepticum (strain SCRI 1043 / ATCC BAA-672) (Erwinia carotovora subsp. atroseptica).